The chain runs to 109 residues: Protein TAR1 (109 aa).

The segment at His-62 to Ile-109 is disordered.

The protein resides in the mitochondrion. Functionally, may be involved in mtDNA stability or mitochondrial gene expression regulation at the post-transcriptional level. The protein is Protein TAR1 (TAR1-A) of Kluyveromyces lactis (strain ATCC 8585 / CBS 2359 / DSM 70799 / NBRC 1267 / NRRL Y-1140 / WM37) (Yeast).